Here is a 184-residue protein sequence, read N- to C-terminus: Photosystem I assembly protein Ycf4 (184 aa).

A run of 2 helical transmembrane segments spans residues 21 to 43 (NFCWAFILLFGALGFFFVGFSSY) and 58 to 80 (LFIPQGIVMCFYGIAGLFISFYL).

The protein belongs to the Ycf4 family.

The protein localises to the plastid. It is found in the chloroplast thylakoid membrane. In terms of biological role, seems to be required for the assembly of the photosystem I complex. The chain is Photosystem I assembly protein Ycf4 from Marchantia polymorpha (Common liverwort).